The sequence spans 231 residues: Urease accessory protein UreE (231 aa).

Residues 185–231 are disordered; that stretch reads VASPLDEPHGSGLHIHGIHSHGEGHSHGDHDHDHSHSHGDHDHDHKH. Basic and acidic residues predominate over residues 204-231; sequence SHGEGHSHGDHDHDHSHSHGDHDHDHKH.

It belongs to the UreE family.

Its subcellular location is the cytoplasm. Involved in urease metallocenter assembly. Binds nickel. Probably functions as a nickel donor during metallocenter assembly. The sequence is that of Urease accessory protein UreE from Yersinia pseudotuberculosis serotype O:1b (strain IP 31758).